Here is a 360-residue protein sequence, read N- to C-terminus: Pyrimidine monooxygenase RutA (360 aa).

Residues 49-50, Asn115, Glu124, 140-141, and Ser190 contribute to the FMN site; these read IK and RY.

Belongs to the NtaA/SnaA/DszA monooxygenase family. RutA subfamily.

It catalyses the reaction uracil + FMNH2 + NADH + O2 = (Z)-3-ureidoacrylate + FMN + NAD(+) + H2O + H(+). The catalysed reaction is thymine + FMNH2 + NADH + O2 = (Z)-2-methylureidoacrylate + FMN + NAD(+) + H2O + H(+). Catalyzes the pyrimidine ring opening between N-3 and C-4 by an unusual flavin hydroperoxide-catalyzed mechanism, adding oxygen atoms in the process to yield ureidoacrylate peracid, that immediately reacts with FMN forming ureidoacrylate and FMN-N(5)-oxide. The FMN-N(5)-oxide reacts spontaneously with NADH to produce FMN. Requires the flavin reductase RutF to regenerate FMN in vivo. In Stutzerimonas stutzeri (strain A1501) (Pseudomonas stutzeri), this protein is Pyrimidine monooxygenase RutA.